Here is a 353-residue protein sequence, read N- to C-terminus: MNGEEIIRFERVTKEYDGTVVLDDVSFAMERGKFYTLLGPSGCGKTTILRLIAGFIEPTEGTIYFHGKPIQNVPPNKRQVNTVFQDYALFPHLDVFENVAFGLRVKKMKEADIRQKVSEALRFVNLEGYERRRIQEMSGGQRQRVAIARAIVNEPEVLLLDEPLSALDLKLRTEMQYELRELQRRLGITFIFVTHDQEEALAMSDYIFVLNKGKIQQFGTPKDIYDEPINRFVADFIGESNILSGRMIDDFLVEFAGKQFACVDRGFAPNEPVDVVIRPEDLELAAPEDGQIVIRVDSLLFRGVHYEICGYDENGNEWLVHSTKKAEVGETVGLRFEPEAIHVMRVEREDEGA.

Residues 7–237 (IRFERVTKEY…PINRFVADFI (231 aa)) enclose the ABC transporter domain. 39 to 46 (GPSGCGKT) is an ATP binding site.

Belongs to the ABC transporter superfamily. Spermidine/putrescine importer (TC 3.A.1.11.1) family. In terms of assembly, the complex is composed of two ATP-binding proteins (PotA), two transmembrane proteins (PotB and PotC) and a solute-binding protein (PotD).

It localises to the cell membrane. The enzyme catalyses ATP + H2O + polyamine-[polyamine-binding protein]Side 1 = ADP + phosphate + polyamineSide 2 + [polyamine-binding protein]Side 1.. In terms of biological role, part of the ABC transporter complex PotABCD involved in spermidine/putrescine import. Responsible for energy coupling to the transport system. This is Spermidine/putrescine import ATP-binding protein PotA from Geobacillus kaustophilus (strain HTA426).